Consider the following 238-residue polypeptide: Metal-independent phosphoserine phosphatase (238 aa).

His-32 (tele-phosphohistidine intermediate) is an active-site residue. The active-site Proton donor/acceptor is Glu-107.

The protein belongs to the phosphoglycerate mutase family.

The catalysed reaction is O-phospho-L-serine + H2O = L-serine + phosphate. It catalyses the reaction O-phospho-D-serine + H2O = D-serine + phosphate. Its function is as follows. Phosphoglycerate mutase-like protein lacking PGM activity, but having a low metal-independent phosphoserine phosphatase activity in vitro. May be involved in serine biosynthesis. The sequence is that of Metal-independent phosphoserine phosphatase (IPSP) from Arabidopsis thaliana (Mouse-ear cress).